Reading from the N-terminus, the 162-residue chain is Putative 4-hydroxy-4-methyl-2-oxoglutarate aldolase (162 aa).

Residues 75-78 (GDML) and Arg97 each bind substrate. Asp98 contributes to the a divalent metal cation binding site.

Belongs to the class II aldolase/RraA-like family. As to quaternary structure, homotrimer. A divalent metal cation serves as cofactor.

It carries out the reaction 4-hydroxy-4-methyl-2-oxoglutarate = 2 pyruvate. It catalyses the reaction oxaloacetate + H(+) = pyruvate + CO2. Functionally, catalyzes the aldol cleavage of 4-hydroxy-4-methyl-2-oxoglutarate (HMG) into 2 molecules of pyruvate. Also contains a secondary oxaloacetate (OAA) decarboxylase activity due to the common pyruvate enolate transition state formed following C-C bond cleavage in the retro-aldol and decarboxylation reactions. The sequence is that of Putative 4-hydroxy-4-methyl-2-oxoglutarate aldolase from Stutzerimonas stutzeri (strain A1501) (Pseudomonas stutzeri).